The primary structure comprises 658 residues: Secretin XcpQ (658 aa).

The first 34 residues, 1-34, serve as a signal peptide directing secretion; the sequence is MSQPLLRALFAPSSRSYVPAVLLSLALGIQAAHA. Residues 51-141 are N0; that stretch reads AHWTINLKDA…TEAGGGQSAP (91 aa). Residues 142–205 are N1; it reads DRLETRVIQV…DVIRQLDQKG (64 aa). An N2 region spans residues 206–279; the sequence is SHDYSVINLR…SLDTPTARSA (74 aa). Residues 280 to 365 are N3; that stretch reads NTRVIRLRHN…VPRAQVLVEA (86 aa). The segment at 302–322 is disordered; the sequence is SEGMKNNGGQGGEQTGGGRPS. The span at 307–320 shows a compositional bias: gly residues; the sequence is NNGGQGGEQTGGGR. Residues 368 to 606 are secretin; the sequence is VEISGDIQDA…VFLRPTVVRD (239 aa). The s domain stretch occupies residues 608–658; it reads AGLAALSGKKYSDIRVIDGTRGPEGRPSILPTNANQLFDGQAVDLRELMTE.

Belongs to the bacterial secretin family. GSP D subfamily. Forms a cylindrical channel with 15 subunits. The closed pentadecameric channel is 170 Angstroms long and 140 Angstroms in diameter.

The protein localises to the cell outer membrane. Functionally, involved in a type II secretion system (T2SS, formerly general secretion pathway, GSP) for the export of proteins. This subunit forms the outer membrane channel. Among its substrates are PrpL, elastase LasB, chitin binding protein D (CbpD), aminopeptidase PaAP, and metalloprotease ImpA. This chain is Secretin XcpQ, found in Pseudomonas aeruginosa (strain ATCC 15692 / DSM 22644 / CIP 104116 / JCM 14847 / LMG 12228 / 1C / PRS 101 / PAO1).